The sequence spans 233 residues: Orotidine 5'-phosphate decarboxylase (233 aa).

Substrate contacts are provided by residues aspartate 11, lysine 34, 61–70 (DLKLHDIPNT), threonine 117, arginine 179, glutamine 188, glycine 208, and arginine 209. Lysine 63 serves as the catalytic Proton donor.

This sequence belongs to the OMP decarboxylase family. Type 1 subfamily. In terms of assembly, homodimer.

The catalysed reaction is orotidine 5'-phosphate + H(+) = UMP + CO2. It participates in pyrimidine metabolism; UMP biosynthesis via de novo pathway; UMP from orotate: step 2/2. Its function is as follows. Catalyzes the decarboxylation of orotidine 5'-monophosphate (OMP) to uridine 5'-monophosphate (UMP). The chain is Orotidine 5'-phosphate decarboxylase from Streptococcus pneumoniae (strain JJA).